The chain runs to 1657 residues: Alsin (1657 aa).

RCC1 repeat units lie at residues 59–108 (DGEV…AVTD), 109–167 (NGVA…ALSI), and 169–218 (REIW…ALVQ). Residues 432–480 (TGAQAGSSAIGPEGLKDSREEQVKQESMQGKKSSSLVDIREEETEGGSR) are disordered. Over residues 445-455 (GLKDSREEQVK) the composition is skewed to basic and acidic residues. The span at 456-467 (QESMQGKKSSSL) shows a compositional bias: polar residues. Ser465, Ser466, Ser483, and Ser492 each carry phosphoserine. At Thr510 the chain carries Phosphothreonine. 2 RCC1 repeats span residues 525 to 576 (RTEV…ALTA) and 578 to 627 (SQVY…FLVD). Lys533 is modified (N6-acetyllysine). One can recognise a DH domain in the interval 690 to 885 (GYIASLHELA…ECLALHLGRK (196 aa)). Positions 901–1007 (GKMTDSLRKP…RAISQAVDQA (107 aa)) constitute a PH domain. MORN repeat units follow at residues 1049–1071 (YDGR…DGKM), 1072–1094 (YSGM…NKAM), 1100–1122 (YVGH…SGEV), 1123–1145 (FEGC…KLTS), 1151–1173 (FIGQ…TRGE), 1175–1197 (YMGM…FGLY), 1198–1220 (YEGN…DDTI), and 1221–1244 (YEGE…NGDY). At Ser1335 the chain carries Phosphoserine. A VPS9 domain is found at 1513-1657 (KQPDIALLGF…YYQIQREKLN (145 aa)).

As to quaternary structure, forms a heteromeric complex with ALS2CL. Interacts with ALS2CL.

In terms of biological role, may act as a GTPase regulator. Controls survival and growth of spinal motoneurons. The sequence is that of Alsin (ALS2) from Homo sapiens (Human).